Consider the following 790-residue polypeptide: Chorion peroxidase (790 aa).

The N-terminal stretch at 1 to 16 (MAKKVLLLSLYSAVLS) is a signal peptide. Positions 17–209 (TWFGFGYVQC…ARIPRAIRKR (193 aa)) are excised as a propeptide. C210 is modified (N-acetylcysteine; in Chorion peroxidase light chain). C216 and C229 form a disulfide bridge. N-linked (Man) tryptophan glycosylation is present at W259. H305 serves as the catalytic Proton acceptor. Residue N327 is glycosylated (N-linked (GlcNAc...) asparagine). Y353 is modified (3',4'-dihydroxyphenylalanine). The cysteines at positions 433 and 440 are disulfide-linked. W479 is a glycosylation site (N-linked (Man) tryptophan). H551 contributes to the heme b binding site. Residue W680 is glycosylated (N-linked (Man) tryptophan). A disulfide bridge links C746 with C774. Residue W785 is glycosylated (N-linked (Man) tryptophan).

Belongs to the peroxidase family. XPO subfamily. Heterodimer. Heme b is required as a cofactor. Post-translationally, N-glycosylated on Trp by mannose and on Asn by N-acetylglucosamine. In terms of processing, there is a hexose glycosylation of an unidentified residue between 654 and 708; Trp-680 is conserved in closely related species and is probably mannosylated.

Its subcellular location is the secreted. The catalysed reaction is 2 a phenolic donor + H2O2 = 2 a phenolic radical donor + 2 H2O. Extremely resistant to denaturating agents, such as SDS and organic solvents. Involved in the formation of a rigid and insoluble egg chorion by catalyzing chorion protein cross-linking through dityrosine formation and phenol oxidase-catalyzed chorion melanization. This is Chorion peroxidase (pxt) from Aedes aegypti (Yellowfever mosquito).